The following is a 633-amino-acid chain: MA3 DOMAIN-CONTAINING TRANSLATION REGULATORY FACTOR 4 (633 aa).

4 consecutive MI domains span residues 56–177, 220–341, 351–472, and 514–633; these read DYKR…RAKK, ETKR…ERSD, RFKK…EISN, and DAKD…STDS. The Nuclear localization signal 1 motif lies at 94–101; it reads VKRLVSMA. A Nuclear localization signal 2 motif is present at residues 389–396; it reads LKKLITLA.

This sequence belongs to the PDCD4 family. In terms of assembly, binds to EIF4A1. The association with ribosomes is modulated by cellular energy status and TOR activity. Mostly expressed, at low levels, in rosette leaves and flower buds, and, to a lower extent, in roots, stems, cauline leaves and flowers.

The protein localises to the nucleus. It is found in the cytoplasm. It localises to the cytosol. Involved in target of rapamycin (TOR)-regulated translation control, especially under energy-deficient conditions. The polypeptide is MA3 DOMAIN-CONTAINING TRANSLATION REGULATORY FACTOR 4 (Arabidopsis thaliana (Mouse-ear cress)).